A 219-amino-acid polypeptide reads, in one-letter code: Germin-like protein subfamily 2 member 3 (219 aa).

An N-terminal signal peptide occupies residues 1-22 (MATSMIPIFVTFMLVAAHMALA). The cysteines at positions 31 and 46 are disulfide-linked. One can recognise a Cupin type-1 domain in the interval 60-209 (IGLATAAATA…AFGAAAPEIQ (150 aa)). A glycan (N-linked (GlcNAc...) asparagine) is linked at N70. Positions 109, 111, 116, and 155 each coordinate Mn(2+).

This sequence belongs to the germin family. As to quaternary structure, oligomer (believed to be a pentamer but probably hexamer).

The protein localises to the secreted. It is found in the extracellular space. It localises to the apoplast. Functionally, may play a role in plant defense. Probably has no oxalate oxidase activity even if the active site is conserved. In Arabidopsis thaliana (Mouse-ear cress), this protein is Germin-like protein subfamily 2 member 3 (GLP8).